The primary structure comprises 277 residues: MEMO1 family protein CTN_0605 (277 aa).

The protein belongs to the MEMO1 family.

The sequence is that of MEMO1 family protein CTN_0605 from Thermotoga neapolitana (strain ATCC 49049 / DSM 4359 / NBRC 107923 / NS-E).